Here is a 195-residue protein sequence, read N- to C-terminus: HTH-type transcriptional regulator BetI (195 aa).

The HTH tetR-type domain maps to E8–L68. The segment at residues T31–F50 is a DNA-binding region (H-T-H motif).

It participates in amine and polyamine biosynthesis; betaine biosynthesis via choline pathway [regulation]. Repressor involved in the biosynthesis of the osmoprotectant glycine betaine. It represses transcription of the choline transporter BetT and the genes of BetAB involved in the synthesis of glycine betaine. The sequence is that of HTH-type transcriptional regulator BetI from Burkholderia thailandensis (strain ATCC 700388 / DSM 13276 / CCUG 48851 / CIP 106301 / E264).